Here is a 185-residue protein sequence, read N- to C-terminus: Peptidyl-tRNA hydrolase (185 aa).

Tyr14 is a tRNA binding site. His19 (proton acceptor) is an active-site residue. TRNA is bound by residues Phe64, Asn66, and Asn112.

Belongs to the PTH family. In terms of assembly, monomer.

Its subcellular location is the cytoplasm. It catalyses the reaction an N-acyl-L-alpha-aminoacyl-tRNA + H2O = an N-acyl-L-amino acid + a tRNA + H(+). Its function is as follows. Hydrolyzes ribosome-free peptidyl-tRNAs (with 1 or more amino acids incorporated), which drop off the ribosome during protein synthesis, or as a result of ribosome stalling. In terms of biological role, catalyzes the release of premature peptidyl moieties from peptidyl-tRNA molecules trapped in stalled 50S ribosomal subunits, and thus maintains levels of free tRNAs and 50S ribosomes. The sequence is that of Peptidyl-tRNA hydrolase from Levilactobacillus brevis (strain ATCC 367 / BCRC 12310 / CIP 105137 / JCM 1170 / LMG 11437 / NCIMB 947 / NCTC 947) (Lactobacillus brevis).